Consider the following 313-residue polypeptide: MNIIRYWSKQSYKKLKVDQEHNTTEYTNVCNSTSLGSTYTLPLKMELWKIYITLIYFLITNSNCFASEPLAWQITFQPPASPIMEELYHFHNFLLYIGTAIVLFVAGLLGFVCIRFNAKNNPVPAKFAHNLLIEIIWTVIPIIILVIIAVPSFRILRHAEKIPEIDLTIKVVGYQWYWHYIYPDYDNLEFDSVMISDKNLQIGQKRLLDVDNRIVIPENTTVRFLITAGDVIHSFAVPSLGFKIDAVPGRINETWTRVTKKGVYYGQCSELCGINHGFMPIAIEVVSKEDFNNWIALKNKTAMNNKSSKLMSK.

Positions 5–51 (RYWSKQSYKKLKVDQEHNTTEYTNVCNSTSLGSTYTLPLKMELWKIY) constitute an RPE1 insert domain. 3 consecutive transmembrane segments (helical) span residues 39 to 59 (YTLPLKMELWKIYITLIYFLI), 94 to 114 (LLYIGTAIVLFVAGLLGFVCI), and 131 to 151 (LLIEIIWTVIPIIILVIIAVP). Cu cation contacts are provided by His-233, Cys-268, Cys-272, and His-276.

It belongs to the cytochrome c oxidase subunit 2 family. Cu cation serves as cofactor. The cofactor is heme.

Its subcellular location is the cell membrane. The enzyme catalyses 4 Fe(II)-[cytochrome c] + O2 + 8 H(+)(in) = 4 Fe(III)-[cytochrome c] + 2 H2O + 4 H(+)(out). Functionally, subunits I and II form the functional core of the enzyme complex. Electrons originating in cytochrome c are transferred via heme a and Cu(A) to the binuclear center formed by heme a3 and Cu(B). In Rickettsia prowazekii (strain Madrid E), this protein is Probable cytochrome c oxidase subunit 2 (ctaC).